The sequence spans 313 residues: PDZ domain-containing protein GIPC2 (313 aa).

Basic and acidic residues predominate over residues 14–27 (KETSRLVEGEHTDA). The interval 14–34 (KETSRLVEGEHTDAAVRSLPS) is disordered. The 81-residue stretch at 117-197 (EVNVYKSEDS…EELFTLTLIE (81 aa)) folds into the PDZ domain.

Belongs to the GIPC family. Probably interacts with SEMA5A.

The protein localises to the cytoplasm. The sequence is that of PDZ domain-containing protein GIPC2 (GIPC2) from Bos taurus (Bovine).